The primary structure comprises 291 residues: Bifunctional protein FolD (291 aa).

Residues glycine 166–glycine 168, isoleucine 191, and isoleucine 232 contribute to the NADP(+) site.

The protein belongs to the tetrahydrofolate dehydrogenase/cyclohydrolase family. Homodimer.

The enzyme catalyses (6R)-5,10-methylene-5,6,7,8-tetrahydrofolate + NADP(+) = (6R)-5,10-methenyltetrahydrofolate + NADPH. The catalysed reaction is (6R)-5,10-methenyltetrahydrofolate + H2O = (6R)-10-formyltetrahydrofolate + H(+). It participates in one-carbon metabolism; tetrahydrofolate interconversion. Its function is as follows. Catalyzes the oxidation of 5,10-methylenetetrahydrofolate to 5,10-methenyltetrahydrofolate and then the hydrolysis of 5,10-methenyltetrahydrofolate to 10-formyltetrahydrofolate. The chain is Bifunctional protein FolD from Aquifex aeolicus (strain VF5).